The primary structure comprises 296 residues: Phosphatidylglycerol--prolipoprotein diacylglyceryl transferase (296 aa).

Helical transmembrane passes span Trp28 to Ala48, Phe72 to Tyr92, Gly110 to Trp130, and Leu139 to Ile159. Arg160 lines the a 1,2-diacyl-sn-glycero-3-phospho-(1'-sn-glycerol) pocket. The next 3 helical transmembrane spans lie at Val197 to Tyr217, Gly226 to Phe246, and Gly263 to Leu283.

The protein belongs to the Lgt family.

It localises to the cell inner membrane. The enzyme catalyses L-cysteinyl-[prolipoprotein] + a 1,2-diacyl-sn-glycero-3-phospho-(1'-sn-glycerol) = an S-1,2-diacyl-sn-glyceryl-L-cysteinyl-[prolipoprotein] + sn-glycerol 1-phosphate + H(+). It functions in the pathway protein modification; lipoprotein biosynthesis (diacylglyceryl transfer). Functionally, catalyzes the transfer of the diacylglyceryl group from phosphatidylglycerol to the sulfhydryl group of the N-terminal cysteine of a prolipoprotein, the first step in the formation of mature lipoproteins. In Chlamydia caviae (strain ATCC VR-813 / DSM 19441 / 03DC25 / GPIC) (Chlamydophila caviae), this protein is Phosphatidylglycerol--prolipoprotein diacylglyceryl transferase.